The sequence spans 295 residues: Epidermal growth factor-like protein 8 (295 aa).

Positions 1-25 (MGSRAELHTLLGGLSFLLLLMSGQG) are cleaved as a signal peptide. The region spanning 34 to 112 (SQGVCSRQTL…RHPGALTCDE (79 aa)) is the EMI domain. 9 cysteine pairs are disulfide-bonded: Cys-38–Cys-97, Cys-65–Cys-71, Cys-96–Cys-110, Cys-115–Cys-125, Cys-119–Cys-131, Cys-133–Cys-142, Cys-149–Cys-160, Cys-156–Cys-169, and Cys-171–Cys-184. Asn-50 is a glycosylation site (N-linked (GlcNAc...) asparagine). The EGF-like 1 domain maps to 111-143 (DEAICAKPCQNGGVCVRPDQCECAPGWGGRHCH). An EGF-like 2; calcium-binding domain is found at 145 to 185 (DVDECRTGVTLCSHRCHNTAGSFTCGCPHGLVLGPDGRTCA). A coiled-coil region spans residues 202-233 (VREAGREDRALRREIRELRGRLERLEQWAGQA).

The protein resides in the secreted. The chain is Epidermal growth factor-like protein 8 (EGFL8) from Sus scrofa (Pig).